A 421-amino-acid chain; its full sequence is Zinc chaperone AztD (421 aa).

Residues M1 to A29 form the signal peptide. Positions 101, 104, 106, 126, 169, 216, and 405 each coordinate Zn(2+). A disulfide bond links C212 and C229. Positions G399–H421 are disordered. The span at V404–H421 shows a compositional bias: basic and acidic residues. Residues H408 to H419 carry the N-terminal Zn(2+)-binding motif; binds a third Zn(2+) with low affinity motif.

As to quaternary structure, monomer.

It localises to the periplasm. Acts as a zinc chaperone in the AztABCD zinc transport system. Directly transfers one zinc cation to the solute binding protein AztC; the transfer occurs without the formation of a stable interaction. Binds 3 Zn(2+), two with high affinity and one with low affinity, and transfers only Zn(2+) bound to site 2 to AztC. The chain is Zinc chaperone AztD from Citrobacter koseri (strain ATCC BAA-895 / CDC 4225-83 / SGSC4696).